The chain runs to 189 residues: UPF0301 protein PputGB1_5045 (189 aa).

Belongs to the UPF0301 (AlgH) family.

This Pseudomonas putida (strain GB-1) protein is UPF0301 protein PputGB1_5045.